Here is a 100-residue protein sequence, read N- to C-terminus: Small ribosomal subunit protein uS14 (100 aa).

It belongs to the universal ribosomal protein uS14 family. As to quaternary structure, part of the 30S ribosomal subunit. Contacts proteins S3 and S10.

Functionally, binds 16S rRNA, required for the assembly of 30S particles and may also be responsible for determining the conformation of the 16S rRNA at the A site. The protein is Small ribosomal subunit protein uS14 of Rippkaea orientalis (strain PCC 8801 / RF-1) (Cyanothece sp. (strain PCC 8801)).